The following is a 512-amino-acid chain: Glutathione-binding protein GsiB (512 aa).

An N-terminal signal peptide occupies residues 1 to 26 (MTQFITHKWLAALGLASSIAAFPALA).

This sequence belongs to the bacterial solute-binding protein 5 family. The complex is composed of two ATP-binding proteins (GsiA), two transmembrane proteins (GsiC and GsiD) and a solute-binding protein (GsiB).

The protein resides in the periplasm. Its function is as follows. Part of the ABC transporter complex GsiABCD involved in glutathione import. Binds glutathione. This Salmonella choleraesuis (strain SC-B67) protein is Glutathione-binding protein GsiB.